The following is a 399-amino-acid chain: Acetylornithine aminotransferase (399 aa).

Residues 102–103 and F135 contribute to the pyridoxal 5'-phosphate site; that span reads GA. R138 is a N(2)-acetyl-L-ornithine binding site. 220–223 is a binding site for pyridoxal 5'-phosphate; that stretch reads DEIQ. Residue K249 is modified to N6-(pyridoxal phosphate)lysine. S277 serves as a coordination point for N(2)-acetyl-L-ornithine. T278 serves as a coordination point for pyridoxal 5'-phosphate.

Belongs to the class-III pyridoxal-phosphate-dependent aminotransferase family. ArgD subfamily. As to quaternary structure, homodimer. It depends on pyridoxal 5'-phosphate as a cofactor.

Its subcellular location is the cytoplasm. The enzyme catalyses N(2)-acetyl-L-ornithine + 2-oxoglutarate = N-acetyl-L-glutamate 5-semialdehyde + L-glutamate. Its pathway is amino-acid biosynthesis; L-arginine biosynthesis; N(2)-acetyl-L-ornithine from L-glutamate: step 4/4. This is Acetylornithine aminotransferase from Oceanobacillus iheyensis (strain DSM 14371 / CIP 107618 / JCM 11309 / KCTC 3954 / HTE831).